Reading from the N-terminus, the 160-residue chain is Large ribosomal subunit protein uL16 (160 aa).

The disordered stretch occupies residues 138–160 (INLSSDSSGEGKTGKDSKEEVKK). The span at 149–160 (KTGKDSKEEVKK) shows a compositional bias: basic and acidic residues.

The protein belongs to the universal ribosomal protein uL16 family. In terms of assembly, part of the 50S ribosomal subunit.

In terms of biological role, binds 23S rRNA and is also seen to make contacts with the A and possibly P site tRNAs. This is Large ribosomal subunit protein uL16 from Prochlorococcus marinus subsp. pastoris (strain CCMP1986 / NIES-2087 / MED4).